Reading from the N-terminus, the 1676-residue chain is MCDAIQIRLASPERIRSWAERVLPNGQVVGEVTKPETINYRTLKPEMDGLFCERIFGPVKDWECHCGKYKKVRYKGIVCERCGVEVTESKVRRHRMGYIDLAAVVSHVWYLKGPPSYLALFLNMSSSEVEQVIYFHSYVVLQSTTELVQPKQLLSEDELIILEERLANQPFQVGIGAQAIQYLLQQLDLDMEIRVLRNQLFHAKSSKREKLMKRLRILDNFASTGADPSWMILSVLPVIPPDLRPMVQLDGGRFATSDLNDLYRRVINRNNRLKRLQEILAPEIIIRNEKRMLQEAVDALMDNGRRGRSVVGANNRALKSLSHILEGKQGRFRQNLLGKRVDYSGRSVIVVGPELKLYQCGLPKEMALELFQPFVIQRLMAQGLANNMKAAKKIIQRKEAIVDQILHQVVKAHPVLLNRAPTLHRLGIQAFDPILVDGRAIQLHPLVCAAFNADFDGDQMAVHVPLSVEAQAEARLLMLSVNNFLSPATGDAIIMPSQDMVIGCYYLTANNPASQAKQSHYFADFEHVLMAFEQKQINLHTWVWVHVNNNLNIILERSALQEDWIQTRGESLFLKTTPGRIIFYQQAAYHVGFYNLTINKSHLKELVKTVYNLKGMACATQLADDLKQLGFHYATTCGLSLGIEDLRVAPSKQKIFQWAQQAIEKTEQLWQRAQITHVEKFHKVVDTWSEASETLKQEVVRYYEHTDPLNPVYMMAFSGARGNLSQVRQLVGMRGLMADPHGQLIDLPILSNFREGLTVTEYLISSYGARKGLVDTSLRTADSGYLTRRLVDVAQDVIIRQADCGTLRGIAVPVSKALIGRVLAQDVNEECKRNQLITADMLVALRDTKQVIVRSPLTCEALRCICQLCYGGNLAYGHMVDLAEAVGIIAAQSIGEPGTQLTMRTFHTGGVFTSAQTASVRATLDGVVTYEGRCKSTRTRYGQEAWLLETSTPLFLQNDGQQHRYDFQAGTVLLVKSGQRVKFNTLLAYLPTSTRFEKATKSVDAHNAGEVVFDQLKLEQNLVKKEGILWILSGQMLHLPAGSELLVSNEQQIKPAQVLAQSYLRSRAKGIVQIHTNQVELILDRLSFEVKEPFHFHSGDGQIIAEKFEHQTPTGGQVFHRNGQIWLVPAAIYEVSSQKDLVDIKHGQFILANQRSICGVKNELSGWVQLVKQNEVIKEIRIRPGIYLPKVKTNQLGFVQSHLLLSSYGINAYTRRFCYVENYEQGILISPVYVFAGVSPPKIVAKSRWLSLVMYQTCMFQHQQWVKSYKKVYLMRCQLQLKVAPQAPLNQVTVHKEKNRREWRLSYFSNIKLQAFQTIKWLVKNHQRVEADVPLALIQLVSAFNGIVRYHPMLNRLLVVSDQDVITYSIGKPHHFQIGDVIRIGDQISHGLVAKTSGFVIARDANQIQVRIAQGYFLSRETICYVKDGDLVNEGDHLASLVFEQVKTGDIIQGLPRIEEILEARKPKNSCELAQFDGVIQEQSLVSDDGRVQAIKGTLIVCEGTRVQAGEPLTDGAVNAHEWLQIHFNNAVPYRGMVEAARESFAKLQAKLLHQVQQVYKSQGVDIADKHIEVILRQMTSKVILDDPGDSDFLPGQLVYLNEIASYKHVIFHPVLLGITKAALNTESFISAASFQETTRILAQAAMEGQIDQLRGLKENVIMGRLIPAGTGAKYL.

The tract at residues 1-582 is DNA-directed RNA polymerase subunit beta'; the sequence is MCDAIQIRLA…FLKTTPGRII (582 aa). Zn(2+) is bound by residues Cys-64, Cys-66, Cys-79, and Cys-82. Residues Asp-454, Asp-456, and Asp-458 each contribute to the Mg(2+) site. The tract at residues 583–1676 is DNA-directed RNA polymerase subunit beta''; that stretch reads FYQQAAYHVG…IPAGTGAKYL (1094 aa). Residues Cys-804, Cys-859, Cys-866, and Cys-869 each coordinate Zn(2+).

The protein in the N-terminal section; belongs to the RNA polymerase beta' chain family. RpoC1 subfamily. It in the C-terminal section; belongs to the RNA polymerase beta' chain family. RpoC2 subfamily. As to quaternary structure, in plastids the minimal PEP RNA polymerase catalytic core is composed of four subunits: alpha, beta, beta', and beta''. When a (nuclear-encoded) sigma factor is associated with the core the holoenzyme is formed, which can initiate transcription. Beta' and beta'' are fused in this algae. Mg(2+) serves as cofactor. It depends on Zn(2+) as a cofactor.

It localises to the plastid. Its subcellular location is the chloroplast. It catalyses the reaction RNA(n) + a ribonucleoside 5'-triphosphate = RNA(n+1) + diphosphate. Functionally, DNA-dependent RNA polymerase catalyzes the transcription of DNA into RNA using the four ribonucleoside triphosphates as substrates. The chain is DNA-directed RNA polymerase subunit beta'-beta'' from Cyanidioschyzon merolae (strain NIES-3377 / 10D) (Unicellular red alga).